The sequence spans 66 residues: Photosystem II reaction center protein J (66 aa).

The helical transmembrane segment at 37–57 threads the bilayer; it reads LWLVATAGGMAVLFVVGLFFY.

The protein belongs to the PsbJ family. In terms of assembly, PSII is composed of 1 copy each of membrane proteins PsbA, PsbB, PsbC, PsbD, PsbE, PsbF, PsbH, PsbI, PsbJ, PsbK, PsbL, PsbM, PsbT, PsbX, PsbY, PsbZ, Psb30/Ycf12, peripheral proteins PsbO, CyanoQ (PsbQ), PsbU, PsbV and a large number of cofactors. It forms dimeric complexes.

The protein localises to the cellular thylakoid membrane. One of the components of the core complex of photosystem II (PSII). PSII is a light-driven water:plastoquinone oxidoreductase that uses light energy to abstract electrons from H(2)O, generating O(2) and a proton gradient subsequently used for ATP formation. It consists of a core antenna complex that captures photons, and an electron transfer chain that converts photonic excitation into a charge separation. This Synechococcus sp. (strain WH7803) protein is Photosystem II reaction center protein J.